The primary structure comprises 385 residues: Cotranscriptional regulator ARB2A homolog (385 aa).

Disordered stretches follow at residues 1 to 65 and 220 to 239; these read MSDI…NGEE and EEQK…NGKL. Residues 52 to 62 show a composition bias toward low complexity; the sequence is NNNNNNSNNSN. The segment covering 220 to 238 has biased composition (basic and acidic residues); that stretch reads EEQKEKAKEEEEKKDDNGK.

It belongs to the ARB2A family.

This is Cotranscriptional regulator ARB2A homolog from Dictyostelium discoideum (Social amoeba).